Consider the following 102-residue polypeptide: NADH-quinone oxidoreductase subunit K 1 (102 aa).

3 consecutive transmembrane segments (helical) span residues L5 to A25, V30 to G50, and V62 to V82.

This sequence belongs to the complex I subunit 4L family. As to quaternary structure, NDH-1 is composed of 14 different subunits. Subunits NuoA, H, J, K, L, M, N constitute the membrane sector of the complex.

It localises to the cell inner membrane. It carries out the reaction a quinone + NADH + 5 H(+)(in) = a quinol + NAD(+) + 4 H(+)(out). In terms of biological role, NDH-1 shuttles electrons from NADH, via FMN and iron-sulfur (Fe-S) centers, to quinones in the respiratory chain. The immediate electron acceptor for the enzyme in this species is believed to be ubiquinone. Couples the redox reaction to proton translocation (for every two electrons transferred, four hydrogen ions are translocated across the cytoplasmic membrane), and thus conserves the redox energy in a proton gradient. The polypeptide is NADH-quinone oxidoreductase subunit K 1 (Citrifermentans bemidjiense (strain ATCC BAA-1014 / DSM 16622 / JCM 12645 / Bem) (Geobacter bemidjiensis)).